A 396-amino-acid polypeptide reads, in one-letter code: Proteasome-activating nucleotidase (396 aa).

Positions 16–57 form a coiled coil; the sequence is ITYLKRRIRQLELQVRMLEADKERLERELSRLRSEMSRLRQP. ATP contacts are provided by residues 181–186 and His-320; that span reads GCGKTL. The docks into pockets in the proteasome alpha-ring to cause gate opening stretch occupies residues 394–396; the sequence is IYG.

The protein belongs to the AAA ATPase family. In terms of assembly, homohexamer. The hexameric complex has a two-ring architecture resembling a top hat that caps the 20S proteasome core at one or both ends. Upon ATP-binding, the C-terminus of PAN interacts with the alpha-rings of the proteasome core by binding to the intersubunit pockets.

The protein resides in the cytoplasm. Its function is as follows. ATPase which is responsible for recognizing, binding, unfolding and translocation of substrate proteins into the archaeal 20S proteasome core particle. Is essential for opening the gate of the 20S proteasome via an interaction with its C-terminus, thereby allowing substrate entry and access to the site of proteolysis. Thus, the C-termini of the proteasomal ATPase function like a 'key in a lock' to induce gate opening and therefore regulate proteolysis. Unfolding activity requires energy from ATP hydrolysis, whereas ATP binding alone promotes ATPase-20S proteasome association which triggers gate opening, and supports translocation of unfolded substrates. This chain is Proteasome-activating nucleotidase, found in Pyrococcus abyssi (strain GE5 / Orsay).